The sequence spans 238 residues: Small proline-rich protein 3 (238 aa).

Residues M1–N67 form a disordered region. Residue S2 is modified to N-acetylserine. Tandem repeats lie at residues T52–S59, T60–N67, T68–Y75, T76–S83, T84–Y91, T92–S99, T100–Y107, T108–S115, T116–R123, T124–S131, T132–Y139, T140–S147, T148–C155, A156–P163, S164–S175, I176–Y183, M184–H191, A192–Y199, T200–S207, S208–Q215, and S216–P223. The interval T52–P223 is 21 X 8 AA approximate tandem repeats. Residues I110–K238 are disordered. Residues P163 to S175 show a composition bias toward low complexity.

Belongs to the cornifin (SPRR) family.

It localises to the cytoplasm. Its function is as follows. Cross-linked envelope protein of keratinocytes. The polypeptide is Small proline-rich protein 3 (Sprr3) (Mus musculus (Mouse)).